The primary structure comprises 244 residues: Uridylate kinase (244 aa).

17-20 is an ATP binding site; sequence KLSG. Gly-59 serves as a coordination point for UMP. Residues Gly-60 and Arg-64 each contribute to the ATP site. UMP is bound by residues Asp-79 and 140 to 147; that span reads TGNPFFTT. Positions 167, 173, and 176 each coordinate ATP.

This sequence belongs to the UMP kinase family. In terms of assembly, homohexamer.

It is found in the cytoplasm. It catalyses the reaction UMP + ATP = UDP + ADP. The protein operates within pyrimidine metabolism; CTP biosynthesis via de novo pathway; UDP from UMP (UMPK route): step 1/1. Its activity is regulated as follows. Inhibited by UTP. Its function is as follows. Catalyzes the reversible phosphorylation of UMP to UDP. The sequence is that of Uridylate kinase from Hahella chejuensis (strain KCTC 2396).